We begin with the raw amino-acid sequence, 391 residues long: Probable sugar efflux transporter (391 aa).

12 helical membrane-spanning segments follow: residues V16–L36, V51–L71, L82–F102, M110–V130, Q138–G158, T170–P190, P210–Y230, I247–S267, F277–N297, W300–L320, I338–I358, and L361–L381.

Belongs to the major facilitator superfamily. SotB (TC 2.A.1.2) family.

It localises to the cell inner membrane. Functionally, involved in the efflux of sugars. The physiological role may be the reduction of the intracellular concentration of toxic sugars or sugar metabolites. This chain is Probable sugar efflux transporter, found in Helicobacter pylori (strain HPAG1).